The primary structure comprises 274 residues: Photosystem II extrinsic protein O (274 aa).

The first 28 residues, 1–28 (MRFRPSIVALLSVCFGLLTFLYSGSAFA), serve as a signal peptide directing secretion.

Belongs to the PsbO family. PSII is composed of 1 copy each of membrane proteins PsbA, PsbB, PsbC, PsbD, PsbE, PsbF, PsbH, PsbI, PsbJ, PsbK, PsbL, PsbM, PsbT, PsbX, PsbY, PsbZ, Psb30/Ycf12, peripheral proteins PsbO, CyanoQ (PsbQ), PsbU, PsbV and a large number of cofactors. It forms dimeric complexes. Contacts PsbQ.

The protein resides in the cellular thylakoid membrane. One of the extrinsic, lumenal subunits of photosystem II (PSII), which stabilize and protect the oxygen-evolving complex. PSII is a light-driven water plastoquinone oxidoreductase, using light energy to abstract electrons from H(2)O, generating a proton gradient subsequently used for ATP formation. Required for dimerization of PSII and for binding of PsbQ to PSII. The polypeptide is Photosystem II extrinsic protein O (Synechocystis sp. (strain ATCC 27184 / PCC 6803 / Kazusa)).